A 476-amino-acid polypeptide reads, in one-letter code: Glutamyl-tRNA(Gln) amidotransferase subunit A (476 aa).

Active-site charge relay system residues include Lys76 and Ser151. The active-site Acyl-ester intermediate is the Ser175.

The protein belongs to the amidase family. GatA subfamily. Heterotrimer of A, B and C subunits.

The catalysed reaction is L-glutamyl-tRNA(Gln) + L-glutamine + ATP + H2O = L-glutaminyl-tRNA(Gln) + L-glutamate + ADP + phosphate + H(+). In terms of biological role, allows the formation of correctly charged Gln-tRNA(Gln) through the transamidation of misacylated Glu-tRNA(Gln) in organisms which lack glutaminyl-tRNA synthetase. The reaction takes place in the presence of glutamine and ATP through an activated gamma-phospho-Glu-tRNA(Gln). The chain is Glutamyl-tRNA(Gln) amidotransferase subunit A from Chlorobium phaeobacteroides (strain DSM 266 / SMG 266 / 2430).